Here is a 188-residue protein sequence, read N- to C-terminus: MDCRKMVRFSYSVIWIMAISKAFELGLVAGLGHQEFARPSRGDLAFRDDSIWPQEEPAIRPRSSQRVLPMGIQHSKELNRTCCLNGGTCMLESFCACPPSFYGRNCEHDVRKENCGSVPHDTWLPKKCSLCKCWHGQLRCFPQAFLPGCDGLVMDEHLVASRTPELPPSARTTTFMLAGICLSIQSYY.

The 30-residue stretch at 78–107 (LNRTCCLNGGTCMLESFCACPPSFYGRNCE) folds into the EGF-like domain. The N-linked (GlcNAc...) asparagine glycan is linked to N79. Disulfide bonds link C82/C89, C83/C95, C97/C106, C115/C133, C128/C149, and C131/C140.

The protein belongs to the EGF-CFC (Cripto-1/FRL1/Cryptic) family. In terms of tissue distribution, expressed weakly in lung, colon and breast. Expressed also strongly in primary cancer tissues; lung and colon cancers.

The protein resides in the cell membrane. Its function is as follows. Could play a role in the determination of the epiblastic cells that subsequently give rise to the mesoderm. Activates the Nodal-dependent signaling pathway. The protein is Protein CRIPTO3 of Homo sapiens (Human).